We begin with the raw amino-acid sequence, 555 residues long: F-box protein COS111 (555 aa).

2 disordered regions span residues 31–82 (MSVS…SVSN) and 124–147 (DHSIKSGVTRSTVSTVRPTSKQHH). The span at 32–42 (SVSSRSSQEES) shows a compositional bias: low complexity. The span at 48-61 (ESVSSLSMQEQQTE) shows a compositional bias: polar residues. Residues 129-142 (SGVTRSTVSTVRPT) show a composition bias toward low complexity. One can recognise an F-box domain in the interval 196-246 (HKDLNSLPHEIMSKIVSHLDQRDVTMCLYVNKNMYSTAVRQLYKEPFFSST). Residues 327–346 (SSSSLSCSRTSSNSNSSTES) are compositionally biased toward low complexity. A disordered region spans residues 327–354 (SSSSLSCSRTSSNSNSSTESKPVKKRRS).

In terms of biological role, F-box protein probably involved in ubiquitin conjugation pathway. This Yarrowia lipolytica (strain CLIB 122 / E 150) (Yeast) protein is F-box protein COS111 (COS111).